A 738-amino-acid chain; its full sequence is NADH dehydrogenase [ubiquinone] iron-sulfur protein 1, mitochondrial (738 aa).

The transit peptide at 1-27 directs the protein to the mitochondrion; that stretch reads MGLGLLASRALRSSRIIRNSTRTIVST. Residues 66–144 form the 2Fe-2S ferredoxin-type domain; sequence DVIEVFVDGY…GMKIKTDTPI (79 aa). [2Fe-2S] cluster contacts are provided by cysteine 100, cysteine 111, cysteine 114, and cysteine 128. The 40-residue stretch at 144–183 folds into the 4Fe-4S His(Cys)3-ligated-type domain; it reads IAKKAREGVMEFLLMNHPLDCPICDQGGECDLQDQSMAFG. [4Fe-4S] cluster contacts are provided by histidine 160, cysteine 164, cysteine 167, cysteine 173, cysteine 212, cysteine 215, cysteine 218, and cysteine 262. The 57-residue stretch at 281-337 folds into the 4Fe-4S Mo/W bis-MGD-type domain; it reads LKGTESIDVTDAVGSNIRIDSRGPEVMRVVPRLNEDINEEWISDKTRFFYDGLKRQR.

The protein belongs to the complex I 75 kDa subunit family. Complex I is composed of about 45 different subunits. This is a component of the iron-sulfur (IP) fragment of the enzyme. Requires [2Fe-2S] cluster as cofactor. It depends on [4Fe-4S] cluster as a cofactor.

The protein localises to the mitochondrion inner membrane. It catalyses the reaction a ubiquinone + NADH + 5 H(+)(in) = a ubiquinol + NAD(+) + 4 H(+)(out). Its function is as follows. Core subunit of the mitochondrial membrane respiratory chain NADH dehydrogenase (Complex I) that is believed to belong to the minimal assembly required for catalysis. Complex I functions in the transfer of electrons from NADH to the respiratory chain. The immediate electron acceptor for the enzyme is believed to be ubiquinone. This is the largest subunit of complex I and it is a component of the iron-sulfur (IP) fragment of the enzyme. It may form part of the active site crevice where NADH is oxidized. The polypeptide is NADH dehydrogenase [ubiquinone] iron-sulfur protein 1, mitochondrial (Solanum tuberosum (Potato)).